We begin with the raw amino-acid sequence, 115 residues long: T cell receptor beta variable 7-7 (115 aa).

An N-terminal signal peptide occupies residues 1–21; it reads MGTSLLCWVVLGFLGTDHTGA. An Ig-like domain is found at 22–115; it reads GVSQSPRYKV…SAMYRCASSL (94 aa). A disulfide bridge links cysteine 42 with cysteine 111.

In terms of assembly, alpha-beta TR is a heterodimer composed of an alpha and beta chain; disulfide-linked. The alpha-beta TR is associated with the transmembrane signaling CD3 coreceptor proteins to form the TR-CD3 (TcR or TCR). The assembly of alpha-beta TR heterodimers with CD3 occurs in the endoplasmic reticulum where a single alpha-beta TR heterodimer associates with one CD3D-CD3E heterodimer, one CD3G-CD3E heterodimer and one CD247 homodimer forming a stable octameric structure. CD3D-CD3E and CD3G-CD3E heterodimers preferentially associate with TR alpha and TR beta chains, respectively. The association of the CD247 homodimer is the last step of TcR assembly in the endoplasmic reticulum and is required for transport to the cell surface.

It localises to the cell membrane. V region of the variable domain of T cell receptor (TR) beta chain that participates in the antigen recognition. Alpha-beta T cell receptors are antigen specific receptors which are essential to the immune response and are present on the cell surface of T lymphocytes. Recognize peptide-major histocompatibility (MH) (pMH) complexes that are displayed by antigen presenting cells (APC), a prerequisite for efficient T cell adaptive immunity against pathogens. Binding of alpha-beta TR to pMH complex initiates TR-CD3 clustering on the cell surface and intracellular activation of LCK that phosphorylates the ITAM motifs of CD3G, CD3D, CD3E and CD247 enabling the recruitment of ZAP70. In turn ZAP70 phosphorylates LAT, which recruits numerous signaling molecules to form the LAT signalosome. The LAT signalosome propagates signal branching to three major signaling pathways, the calcium, the mitogen-activated protein kinase (MAPK) kinase and the nuclear factor NF-kappa-B (NF-kB) pathways, leading to the mobilization of transcription factors that are critical for gene expression and essential for T cell growth and differentiation. The T cell repertoire is generated in the thymus, by V-(D)-J rearrangement. This repertoire is then shaped by intrathymic selection events to generate a peripheral T cell pool of self-MH restricted, non-autoaggressive T cells. Post-thymic interaction of alpha-beta TR with the pMH complexes shapes TR structural and functional avidity. The protein is T cell receptor beta variable 7-7 of Homo sapiens (Human).